Consider the following 379-residue polypeptide: Odorant receptor 33b (379 aa).

Over M1–D37 the chain is Cytoplasmic. Residues L38 to M58 traverse the membrane as a helical segment. The Extracellular segment spans residues E59 to D64. The chain crosses the membrane as a helical span at residues V65 to F85. The Cytoplasmic segment spans residues R86–S129. Residues F130–G150 form a helical membrane-spanning segment. The Extracellular portion of the chain corresponds to H151–A165. The helical transmembrane segment at T166–L186 threads the bilayer. Over Q187–Q256 the chain is Cytoplasmic. A helical transmembrane segment spans residues L257–F277. Topologically, residues A278–N281 are extracellular. A helical transmembrane segment spans residues F282–C302. At Y303–G355 the chain is on the cytoplasmic side. The helical transmembrane segment at I356–M376 threads the bilayer. Topologically, residues S377–R379 are extracellular.

This sequence belongs to the insect chemoreceptor superfamily. Heteromeric odorant receptor channel (TC 1.A.69) family. Or2a subfamily. As to quaternary structure, interacts with Orco. Complexes exist early in the endomembrane system in olfactory sensory neurons (OSNs), coupling these complexes to the conserved ciliary trafficking pathway. Expressed in 15 cells in the antenna but not the maxillary palp.

The protein localises to the cell membrane. Functionally, odorant receptor which mediates acceptance or avoidance behavior, depending on its substrates. The odorant receptor repertoire encodes a large collection of odor stimuli that vary widely in identity, intensity, and duration. May form a complex with Orco to form odorant-sensing units, providing sensitive and prolonged odorant signaling and calcium permeability. Involved in the behavioral responses to pentyl acetate and pyrazines. The sequence is that of Odorant receptor 33b (Or33b) from Drosophila melanogaster (Fruit fly).